The sequence spans 624 residues: ATP-dependent RNA helicase MRH4, mitochondrial (624 aa).

The transit peptide at 1–43 directs the protein to the mitochondrion; the sequence is MSPVASTCLLCEMRTVVWGWQPAVPQPWHFVRFASSARLARRK. Residues 41 to 120 are disordered; the sequence is RRKPARMALS…KDAADKKQDG (80 aa). The span at 86–119 shows a compositional bias: basic and acidic residues; sequence RLPDRPIPRSDAELKRSSSDLNNKEKDAADKKQD. The Q motif motif lies at 151 to 184; sequence TSFDQFPLLPQVREAVYANAFPTLTEISPTPIQR. Positions 212–427 constitute a Helicase ATP-binding domain; it reads EEELFHFDQF…EKKFPEMKRL (216 aa). 225–232 contacts ATP; that stretch reads AETGTGKT. The short motif at 374–377 is the DEAD box element; it reads DEAD. The Helicase C-terminal domain occupies 438–624; that stretch reads RVQLGVVDVD…EAMFRGQALI (187 aa).

It belongs to the DEAD box helicase family. MRH4 subfamily.

It localises to the mitochondrion. The catalysed reaction is ATP + H2O = ADP + phosphate + H(+). Functionally, ATP-binding RNA helicase involved in mitochondrial RNA metabolism. Required for maintenance of mitochondrial DNA. The polypeptide is ATP-dependent RNA helicase MRH4, mitochondrial (MRH4) (Ajellomyces capsulatus (strain NAm1 / WU24) (Darling's disease fungus)).